The chain runs to 66 residues: Large ribosomal subunit protein bL33c (66 aa).

This sequence belongs to the bacterial ribosomal protein bL33 family.

Its subcellular location is the plastid. It localises to the chloroplast. This is Large ribosomal subunit protein bL33c from Vitis vinifera (Grape).